A 507-amino-acid polypeptide reads, in one-letter code: AMP phosphorylase (507 aa).

AMP is bound by residues Gly168, 194–199, and Thr203; that span reads SRAITG. Catalysis depends on Asp256, which acts as the Proton donor. Ser264 and Lys288 together coordinate AMP.

This sequence belongs to the thymidine/pyrimidine-nucleoside phosphorylase family. Type 2 subfamily.

The catalysed reaction is AMP + phosphate = alpha-D-ribose 1,5-bisphosphate + adenine. It carries out the reaction CMP + phosphate = cytosine + alpha-D-ribose 1,5-bisphosphate. It catalyses the reaction UMP + phosphate = alpha-D-ribose 1,5-bisphosphate + uracil. Catalyzes the conversion of AMP and phosphate to adenine and ribose 1,5-bisphosphate (R15P). Exhibits phosphorylase activity toward CMP and UMP in addition to AMP. Functions in an archaeal AMP degradation pathway, together with R15P isomerase and RubisCO. This Methanosarcina mazei (strain ATCC BAA-159 / DSM 3647 / Goe1 / Go1 / JCM 11833 / OCM 88) (Methanosarcina frisia) protein is AMP phosphorylase.